The chain runs to 533 residues: UDP-glucuronosyltransferase 1-2 (533 aa).

The signal sequence occupies residues 1 to 27 (MDTGLCAPLRGLSGLLLLLCALPWAEG). 4 N-linked (GlcNAc...) asparagine glycosylation sites follow: Asn-133, Asn-141, Asn-295, and Asn-433. Residues 491–507 (VIGFLLAIVLTVVFIVY) form a helical membrane-spanning segment.

This sequence belongs to the UDP-glycosyltransferase family.

It localises to the microsome. Its subcellular location is the endoplasmic reticulum membrane. It carries out the reaction glucuronate acceptor + UDP-alpha-D-glucuronate = acceptor beta-D-glucuronoside + UDP + H(+). Its function is as follows. UDPGT is of major importance in the conjugation and subsequent elimination of potentially toxic xenobiotics and endogenous compounds. This is UDP-glucuronosyltransferase 1-2 (Ugt1a2) from Rattus norvegicus (Rat).